The sequence spans 436 residues: UPF0597 protein YhaM (436 aa).

Belongs to the UPF0597 family.

The sequence is that of UPF0597 protein YhaM from Escherichia coli (strain K12 / MC4100 / BW2952).